Here is a 170-residue protein sequence, read N- to C-terminus: CCHC-type zinc finger nucleic acid binding protein (170 aa).

An N-acetylserine modification is found at S2. The segment at 4-21 (NECFKCGRSGHWARECPT) adopts a CCHC-type 1 zinc-finger fold. K8 carries the N6-acetyllysine modification. Omega-N-methylarginine; by PRMT1 is present on residues R25 and R27. The tract at residues 25–33 (RGRGMRSRG) is RNA-binding Arg/Gly-rich region (RGG-box). S42 carries the phosphoserine modification. 6 consecutive CCHC-type zinc fingers follow at residues 45–62 (DICY…DCDL), 65–82 (DACY…DCKE), 89–106 (QCCY…DCDH), 110–127 (QKCY…DCTK), 128–145 (VKCY…NCSK), and 149–166 (VNCY…ECTI). Omega-N-methylarginine is present on R72.

As to quaternary structure, associates with the 40S ribosomal subunit, the 80S ribosome and with polysomes. In terms of processing, arginine methylation by PRMT1 in the Arg/Gly-rich region impedes RNA binding.

It localises to the nucleus. The protein resides in the cytoplasm. It is found in the endoplasmic reticulum. Its function is as follows. Single-stranded DNA-binding protein that preferentially binds to the sterol regulatory element (SRE) sequence 5'-GTGCGGTG-3', and thereby mediates transcriptional repression. Has a role as transactivator of the Myc promoter. Binds single-stranded RNA in a sequence-specific manner. Binds G-rich elements in target mRNA coding sequences. Prevents G-quadruplex structure formation in vitro, suggesting a role in supporting translation by resolving stable structures on mRNAs. In Bos taurus (Bovine), this protein is CCHC-type zinc finger nucleic acid binding protein (CNBP).